The sequence spans 174 residues: Transcription antitermination protein NusB (174 aa).

This sequence belongs to the NusB family.

Its function is as follows. Involved in transcription antitermination. Required for transcription of ribosomal RNA (rRNA) genes. Binds specifically to the boxA antiterminator sequence of the ribosomal RNA (rrn) operons. This is Transcription antitermination protein NusB from Rhodopseudomonas palustris (strain TIE-1).